We begin with the raw amino-acid sequence, 246 residues long: Sulfate transporter CysZ (246 aa).

Transmembrane regions (helical) follow at residues 24–44 (LFVL…IGFA), 69–89 (IVWP…FTMV), 148–168 (LLVL…WILF), and 214–234 (LLIP…ATLF).

This sequence belongs to the CysZ family.

The protein resides in the cell inner membrane. In terms of biological role, high affinity, high specificity proton-dependent sulfate transporter, which mediates sulfate uptake. Provides the sulfur source for the cysteine synthesis pathway. In Pseudomonas aeruginosa (strain ATCC 15692 / DSM 22644 / CIP 104116 / JCM 14847 / LMG 12228 / 1C / PRS 101 / PAO1), this protein is Sulfate transporter CysZ.